A 380-amino-acid chain; its full sequence is Cytochrome b (380 aa).

The next 4 helical transmembrane spans lie at 34-54, 78-99, 114-134, and 179-199; these read FGSL…LLAM, WLLH…FLHI, WNTG…GYVL, and FFAL…IHLM. Heme b is bound by residues His84 and His98. His183 and His197 together coordinate heme b. An a ubiquinone-binding site is contributed by His202. 4 helical membrane-spanning segments follow: residues 227–247, 289–309, 321–341, and 348–368; these read IKDI…TLFS, LGGV…PFLH, LSQT…WVGS, and FIII…ILFP.

Belongs to the cytochrome b family. The cytochrome bc1 complex contains 11 subunits: 3 respiratory subunits (MT-CYB, CYC1 and UQCRFS1), 2 core proteins (UQCRC1 and UQCRC2) and 6 low-molecular weight proteins (UQCRH/QCR6, UQCRB/QCR7, UQCRQ/QCR8, UQCR10/QCR9, UQCR11/QCR10 and a cleavage product of UQCRFS1). This cytochrome bc1 complex then forms a dimer. It depends on heme b as a cofactor.

The protein resides in the mitochondrion inner membrane. In terms of biological role, component of the ubiquinol-cytochrome c reductase complex (complex III or cytochrome b-c1 complex) that is part of the mitochondrial respiratory chain. The b-c1 complex mediates electron transfer from ubiquinol to cytochrome c. Contributes to the generation of a proton gradient across the mitochondrial membrane that is then used for ATP synthesis. This is Cytochrome b (MT-CYB) from Meleagris gallopavo (Wild turkey).